Reading from the N-terminus, the 146-residue chain is D-aminoacyl-tRNA deacylase (146 aa).

The short motif at G137–P138 is the Gly-cisPro motif, important for rejection of L-amino acids element.

It belongs to the DTD family. Homodimer.

It localises to the cytoplasm. The enzyme catalyses glycyl-tRNA(Ala) + H2O = tRNA(Ala) + glycine + H(+). It catalyses the reaction a D-aminoacyl-tRNA + H2O = a tRNA + a D-alpha-amino acid + H(+). Its function is as follows. An aminoacyl-tRNA editing enzyme that deacylates mischarged D-aminoacyl-tRNAs. Also deacylates mischarged glycyl-tRNA(Ala), protecting cells against glycine mischarging by AlaRS. Acts via tRNA-based rather than protein-based catalysis; rejects L-amino acids rather than detecting D-amino acids in the active site. By recycling D-aminoacyl-tRNA to D-amino acids and free tRNA molecules, this enzyme counteracts the toxicity associated with the formation of D-aminoacyl-tRNA entities in vivo and helps enforce protein L-homochirality. This chain is D-aminoacyl-tRNA deacylase, found in Thermodesulfovibrio yellowstonii (strain ATCC 51303 / DSM 11347 / YP87).